A 162-amino-acid chain; its full sequence is Peptide methionine sulfoxide reductase MsrA (162 aa).

The active site involves Cys16.

This sequence belongs to the MsrA Met sulfoxide reductase family.

It catalyses the reaction L-methionyl-[protein] + [thioredoxin]-disulfide + H2O = L-methionyl-(S)-S-oxide-[protein] + [thioredoxin]-dithiol. The enzyme catalyses [thioredoxin]-disulfide + L-methionine + H2O = L-methionine (S)-S-oxide + [thioredoxin]-dithiol. In terms of biological role, has an important function as a repair enzyme for proteins that have been inactivated by oxidation. Catalyzes the reversible oxidation-reduction of methionine sulfoxide in proteins to methionine. The protein is Peptide methionine sulfoxide reductase MsrA of Geobacter sulfurreducens (strain ATCC 51573 / DSM 12127 / PCA).